Here is a 126-residue protein sequence, read N- to C-terminus: MADLQQLEDQIVSLSLLDAAALVKKLEERLGVSAAAAAPVVVAGGAAGAGAAEAAAEQTEFTVILKDAGANKINTIKAVREVTALGLKEAKDLVDGAPKPLKENISKEDAEAIKKKFDGVATIEIK.

It belongs to the bacterial ribosomal protein bL12 family. In terms of assembly, homodimer. Part of the ribosomal stalk of the 50S ribosomal subunit. Forms a multimeric L10(L12)X complex, where L10 forms an elongated spine to which 2 to 4 L12 dimers bind in a sequential fashion. Binds GTP-bound translation factors.

Functionally, forms part of the ribosomal stalk which helps the ribosome interact with GTP-bound translation factors. Is thus essential for accurate translation. This is Large ribosomal subunit protein bL12 from Acidobacterium capsulatum (strain ATCC 51196 / DSM 11244 / BCRC 80197 / JCM 7670 / NBRC 15755 / NCIMB 13165 / 161).